Here is a 448-residue protein sequence, read N- to C-terminus: Tumor necrosis factor receptor superfamily member EDAR (448 aa).

Residues 1–26 (MAHVGDCKWMSWLPVLVVSLMCSAKA) form the signal peptide. Topologically, residues 27–187 (EDSNCGENEY…LSGQGHLATA (161 aa)) are extracellular. TNFR-Cys repeat units follow at residues 30–71 (NCGE…DYGC), 73–113 (PCPA…DAEC), and 115–150 (PCLP…ECVG). Intrachain disulfides connect Cys31–Cys44, Cys47–Cys60, Cys50–Cys71, Cys74–Cys87, Cys93–Cys113, and Cys135–Cys148. An N-linked (GlcNAc...) asparagine glycan is attached at Asn38. The chain crosses the membrane as a helical span at residues 188–208 (LIIAMSTIFIMAIAIVLIIMF). At 209–448 (YIMKTKPSAP…PPASPPPAAS (240 aa)) the chain is on the cytoplasmic side. Positions 220–229 (CCSSPPGKSA) are enriched in low complexity. Residues 220 to 297 (CCSSPPGKSA…EEPAPDKQGS (78 aa)) form a disordered region. The span at 258–283 (LTATPTKTPKSENDASSENEQLLSRS) shows a compositional bias: polar residues. The Death domain occupies 358 to 431 (RMLSSTYNSE…DAVESLCADI (74 aa)).

As to quaternary structure, binds to EDARADD. Associates with TRAF1, TRAF2, TRAF3 and NIK.

Its subcellular location is the membrane. Its function is as follows. Receptor for EDA isoform TAA, but not for EDA isoform TA-2. May mediate the activation of NF-kappa-B and JNK. May promote caspase-independent cell death. The chain is Tumor necrosis factor receptor superfamily member EDAR (Edar) from Mus musculus (Mouse).